A 339-amino-acid chain; its full sequence is Non-homologous end joining protein Ku (339 aa).

One can recognise a Ku domain in the interval 10–187 (ITFGLVNIPV…LPKATTGKPT (178 aa)). 2 disordered regions span residues 230-251 (DSGK…RQGA) and 263-339 (SLGQ…KHAA). The segment covering 267 to 277 (RGKEDKEDATP) has biased composition (basic and acidic residues). The segment covering 278 to 289 (ARRKAPARHAAA) has biased composition (basic residues). The segment covering 290 to 310 (RKQPAAKRAATPPAKRASTAA) has biased composition (low complexity).

It belongs to the prokaryotic Ku family. In terms of assembly, homodimer. Interacts with LigD.

Its function is as follows. With LigD forms a non-homologous end joining (NHEJ) DNA repair enzyme, which repairs dsDNA breaks with reduced fidelity. Binds linear dsDNA with 5'- and 3'- overhangs but not closed circular dsDNA nor ssDNA. Recruits and stimulates the ligase activity of LigD. The sequence is that of Non-homologous end joining protein Ku from Cupriavidus necator (strain ATCC 17699 / DSM 428 / KCTC 22496 / NCIMB 10442 / H16 / Stanier 337) (Ralstonia eutropha).